We begin with the raw amino-acid sequence, 899 residues long: MPILNESLLRTRIFIGRGFRRSRCPYCGHHYWTLNPSQDNCGDQPCTPYGFIGNPPGTYRPESIKDVRERFLSFFEKRGHTRVARYPVVARWRNDVYLVGASIYDFQPWVTEGVVPPPANPLTISQPSIRLTDVDKVGRSGRHLTGFEMMAHHAFNFPGKEIYWINETVEYAHEFFTRELGFRDDEVTYKENIWEGGGNAGESFEVLVRGLELATLVFMHYRVIGDEYREMPIRIVDTGYGLERIYWVLTGKPTIYEAVFEGFLNKARQLLGLPKPDEKVLASLAIHMGQLDPEVLALDKAYVEVAKRIGIDSSELINFIKPQEALYVLADHSRTVSWMINDGVIPSNSGVGYLARLLIRRMLKYMHVIGAQVPLTEIFNTHLNYLINDYPELKESMQLILDLVDLEEAKYKSAISQLPKLISRIKGELTINDLINLYDSHGIPPEVVRDEAAKRGVKVNVPDNFYEMLAARHQKPAKGEEGNRLDVTADDVIDLPPTRELFYEDTYAFEGKAKVLKVIKGKYIVLDSTIFYPEGGGQPADRGVLRFNGVEAKVVDVQRVGPVIVHVIDGPTPGVGDVVEMRIDSERRLGLMRMHTGTHILLQSIRRVLGKHVWQAGAQKDIPLSRLDVTHYRLPTPDEVKRIEELANEVVLSDLPVKAELMPRNEAEAKYGFIIYQGGVVPGGEVRIVKVGEGNDTYDVEACGGTHLDRTSRIGLIKIVKVDKIQEGVIRFIFTTGKYALDYVRNLEGKLDSAASKLRVGRDEVDEAVDRLIKELNNAEERSRVLARKAIEADLANIVKSMITVSGFKVAVYYEDYWVRDYLQELASKYPGDVLVLIHGNEYQVYTNGKVKAIDVAKVLNELGGKGGGSGTFAQGVFNNPVKQDDVVNTIKRKLTLTQ.

Residues His595, His599, Cys703, and His707 each coordinate Zn(2+).

The protein belongs to the class-II aminoacyl-tRNA synthetase family. It depends on Zn(2+) as a cofactor.

Its subcellular location is the cytoplasm. The catalysed reaction is tRNA(Ala) + L-alanine + ATP = L-alanyl-tRNA(Ala) + AMP + diphosphate. Catalyzes the attachment of alanine to tRNA(Ala) in a two-step reaction: alanine is first activated by ATP to form Ala-AMP and then transferred to the acceptor end of tRNA(Ala). Also edits incorrectly charged Ser-tRNA(Ala) and Gly-tRNA(Ala) via its editing domain. The polypeptide is Alanine--tRNA ligase (Caldivirga maquilingensis (strain ATCC 700844 / DSM 13496 / JCM 10307 / IC-167)).